Consider the following 127-residue polypeptide: Fluoride-specific ion channel FluC (127 aa).

The next 4 membrane-spanning stretches (helical) occupy residues 7-27 (LFLI…LTLL), 37-57 (FGTL…LAMF), 70-90 (FFVT…AEVI), and 102-122 (ITIT…GVFI). 2 residues coordinate Na(+): Gly77 and Thr80.

The protein belongs to the fluoride channel Fluc/FEX (TC 1.A.43) family.

The protein resides in the cell inner membrane. The enzyme catalyses fluoride(in) = fluoride(out). With respect to regulation, na(+) is not transported, but it plays an essential structural role and its presence is essential for fluoride channel function. Functionally, fluoride-specific ion channel. Important for reducing fluoride concentration in the cell, thus reducing its toxicity. This Histophilus somni (strain 129Pt) (Haemophilus somnus) protein is Fluoride-specific ion channel FluC.